We begin with the raw amino-acid sequence, 361 residues long: Chorismate synthase (361 aa).

Positions 48 and 54 each coordinate NADP(+). Residues 125-127 (RSS), 238-239 (NA), Gly278, 293-297 (KPTSS), and Arg319 contribute to the FMN site.

This sequence belongs to the chorismate synthase family. In terms of assembly, homotetramer. Requires FMNH2 as cofactor.

It carries out the reaction 5-O-(1-carboxyvinyl)-3-phosphoshikimate = chorismate + phosphate. It functions in the pathway metabolic intermediate biosynthesis; chorismate biosynthesis; chorismate from D-erythrose 4-phosphate and phosphoenolpyruvate: step 7/7. In terms of biological role, catalyzes the anti-1,4-elimination of the C-3 phosphate and the C-6 proR hydrogen from 5-enolpyruvylshikimate-3-phosphate (EPSP) to yield chorismate, which is the branch point compound that serves as the starting substrate for the three terminal pathways of aromatic amino acid biosynthesis. This reaction introduces a second double bond into the aromatic ring system. This Klebsiella pneumoniae (strain 342) protein is Chorismate synthase.